The sequence spans 123 residues: Large ribosomal subunit protein uL29 (123 aa).

At Lys-19 the chain carries N6-acetyllysine. A Glycyl lysine isopeptide (Lys-Gly) (interchain with G-Cter in SUMO2) cross-link involves residue Lys-25. A Phosphoserine modification is found at Ser-29. Residue Lys-43 is modified to N6-acetyllysine.

The protein belongs to the universal ribosomal protein uL29 family. In terms of assembly, component of the large ribosomal subunit.

Its subcellular location is the cytoplasm. Its function is as follows. Component of the large ribosomal subunit. The ribosome is a large ribonucleoprotein complex responsible for the synthesis of proteins in the cell. This chain is Large ribosomal subunit protein uL29 (RPL35), found in Sus scrofa (Pig).